Consider the following 173-residue polypeptide: Crossover junction endodeoxyribonuclease RuvC (173 aa).

Catalysis depends on residues D10, E71, and D143. The Mg(2+) site is built by D10, E71, and D143.

The protein belongs to the RuvC family. Homodimer which binds Holliday junction (HJ) DNA. The HJ becomes 2-fold symmetrical on binding to RuvC with unstacked arms; it has a different conformation from HJ DNA in complex with RuvA. In the full resolvosome a probable DNA-RuvA(4)-RuvB(12)-RuvC(2) complex forms which resolves the HJ. Requires Mg(2+) as cofactor.

The protein resides in the cytoplasm. It carries out the reaction Endonucleolytic cleavage at a junction such as a reciprocal single-stranded crossover between two homologous DNA duplexes (Holliday junction).. Functionally, the RuvA-RuvB-RuvC complex processes Holliday junction (HJ) DNA during genetic recombination and DNA repair. Endonuclease that resolves HJ intermediates. Cleaves cruciform DNA by making single-stranded nicks across the HJ at symmetrical positions within the homologous arms, yielding a 5'-phosphate and a 3'-hydroxyl group; requires a central core of homology in the junction. The consensus cleavage sequence is 5'-(A/T)TT(C/G)-3'. Cleavage occurs on the 3'-side of the TT dinucleotide at the point of strand exchange. HJ branch migration catalyzed by RuvA-RuvB allows RuvC to scan DNA until it finds its consensus sequence, where it cleaves and resolves the cruciform DNA. This is Crossover junction endodeoxyribonuclease RuvC from Gloeobacter violaceus (strain ATCC 29082 / PCC 7421).